Consider the following 186-residue polypeptide: Putative manganese efflux pump MntP (186 aa).

6 helical membrane passes run 1–21 (MSFLTNFLLGLGLAMDAFAVS), 41–61 (VFFGGFQALMPVLGWVGGSAV), 62–82 (SGFVSDYAPWIAFGLLAFIGG), 105–127 (LFLLAVATSIDALAVGISFAFLG), 139–159 (CVTFVMSFCGAVLGYRIGHFF), and 163–183 (VEILGGLILIGLGVKILAEHM).

It belongs to the MntP (TC 9.B.29) family.

It localises to the cell membrane. Functionally, probably functions as a manganese efflux pump. In Methanosarcina mazei (strain ATCC BAA-159 / DSM 3647 / Goe1 / Go1 / JCM 11833 / OCM 88) (Methanosarcina frisia), this protein is Putative manganese efflux pump MntP.